A 232-amino-acid polypeptide reads, in one-letter code: NAD(P)H-quinone oxidoreductase subunit K 1 (232 aa).

Residues Cys49, Cys50, Cys114, and Cys145 each coordinate [4Fe-4S] cluster.

It belongs to the complex I 20 kDa subunit family. As to quaternary structure, NDH-1 can be composed of about 15 different subunits; different subcomplexes with different compositions have been identified which probably have different functions. [4Fe-4S] cluster is required as a cofactor.

The protein resides in the cellular thylakoid membrane. The catalysed reaction is a plastoquinone + NADH + (n+1) H(+)(in) = a plastoquinol + NAD(+) + n H(+)(out). The enzyme catalyses a plastoquinone + NADPH + (n+1) H(+)(in) = a plastoquinol + NADP(+) + n H(+)(out). Functionally, NDH-1 shuttles electrons from an unknown electron donor, via FMN and iron-sulfur (Fe-S) centers, to quinones in the respiratory and/or the photosynthetic chain. The immediate electron acceptor for the enzyme in this species is believed to be plastoquinone. Couples the redox reaction to proton translocation, and thus conserves the redox energy in a proton gradient. Cyanobacterial NDH-1 also plays a role in inorganic carbon-concentration. This Acaryochloris marina (strain MBIC 11017) protein is NAD(P)H-quinone oxidoreductase subunit K 1.